We begin with the raw amino-acid sequence, 403 residues long: Pyruvate, phosphate dikinase regulatory protein 1, chloroplastic (403 aa).

The N-terminal 86 residues, 1–86, are a transit peptide targeting the chloroplast; sequence MALLSAMKLQ…NTTGPMRPIE (86 aa). The segment at 1–108 is disordered; sequence MALLSAMKLQ…DVSSSSNGVS (108 aa). Low complexity-rich tracts occupy residues 17 to 26, 69 to 80, and 87 to 108; these read SSNLNPNSKP, STITNGSNNTTG, and SSSRTDVSTLDSDVSSSSNGVS. Residue 269–276 coordinates ADP; that stretch reads GVSRTGKT.

This sequence belongs to the pyruvate, phosphate/water dikinase regulatory protein family. PDRP subfamily. Interacts with PPDK1. In terms of tissue distribution, expressed in green tissues.

Its subcellular location is the plastid. The protein resides in the chloroplast stroma. The enzyme catalyses N(tele)-phospho-L-histidyl/L-threonyl-[pyruvate, phosphate dikinase] + ADP = N(tele)-phospho-L-histidyl/O-phospho-L-threonyl-[pyruvate, phosphate dikinase] + AMP + H(+). It catalyses the reaction N(tele)-phospho-L-histidyl/O-phospho-L-threonyl-[pyruvate, phosphate dikinase] + phosphate + H(+) = N(tele)-phospho-L-histidyl/L-threonyl-[pyruvate, phosphate dikinase] + diphosphate. Regulated by light/dark exposure. Functionally, bifunctional serine/threonine kinase and phosphorylase involved in the dark/light-mediated regulation of PPDK by catalyzing its phosphorylation/dephosphorylation. Dark/light-induced changes in stromal concentrations of the competing ADP and Pi substrates govern the direction of the reaction. In the dark, phosphorylates the catalytic intermediate of PPDK (PPDK-HisP), inactivating it. Light exposure induces the phosphorolysis reaction that reactivates PPDK. Unlike the kinase function which can utilize either Thr or Ser as target, the phosphorylase function has a strict substrate requirement for threonyl phosphate. This chain is Pyruvate, phosphate dikinase regulatory protein 1, chloroplastic (RP1), found in Arabidopsis thaliana (Mouse-ear cress).